We begin with the raw amino-acid sequence, 287 residues long: Proteasome subunit alpha (287 aa).

The disordered stretch occupies residues 241 to 287; the sequence is GVVAGEEPHTAAHAPSVPQPGAPAGLGDPGAPDTGGTAGSGGEAPTT. The span at 262–275 shows a compositional bias: low complexity; it reads APAGLGDPGAPDTG. Gly residues predominate over residues 276-287; that stretch reads GTAGSGGEAPTT.

It belongs to the peptidase T1A family. The 20S proteasome core is composed of 14 alpha and 14 beta subunits that assemble into four stacked heptameric rings, resulting in a barrel-shaped structure. The two inner rings, each composed of seven catalytic beta subunits, are sandwiched by two outer rings, each composed of seven alpha subunits. The catalytic chamber with the active sites is on the inside of the barrel. Has a gated structure, the ends of the cylinder being occluded by the N-termini of the alpha-subunits. Is capped by the proteasome-associated ATPase, ARC.

It localises to the cytoplasm. Its pathway is protein degradation; proteasomal Pup-dependent pathway. Its activity is regulated as follows. The formation of the proteasomal ATPase ARC-20S proteasome complex, likely via the docking of the C-termini of ARC into the intersubunit pockets in the alpha-rings, may trigger opening of the gate for substrate entry. Interconversion between the open-gate and close-gate conformations leads to a dynamic regulation of the 20S proteasome proteolysis activity. Its function is as follows. Component of the proteasome core, a large protease complex with broad specificity involved in protein degradation. This chain is Proteasome subunit alpha, found in Geodermatophilus obscurus (strain ATCC 25078 / DSM 43160 / JCM 3152 / CCUG 61914 / KCC A-0152 / KCTC 9177 / NBRC 13315 / NRRL B-3577 / G-20).